Consider the following 408-residue polypeptide: LL-diaminopimelate aminotransferase (408 aa).

2 residues coordinate substrate: Tyr-15 and Gly-42. Pyridoxal 5'-phosphate-binding positions include Tyr-72, 108–109 (SK), Tyr-132, Asn-187, Tyr-218, and 246–248 (SFS). Lys-109, Tyr-132, and Asn-187 together coordinate substrate. Position 249 is an N6-(pyridoxal phosphate)lysine (Lys-249). Pyridoxal 5'-phosphate is bound by residues Arg-257 and Asn-292. Substrate contacts are provided by Asn-292 and Arg-388.

The protein belongs to the class-I pyridoxal-phosphate-dependent aminotransferase family. LL-diaminopimelate aminotransferase subfamily. As to quaternary structure, homodimer. It depends on pyridoxal 5'-phosphate as a cofactor.

It carries out the reaction (2S,6S)-2,6-diaminopimelate + 2-oxoglutarate = (S)-2,3,4,5-tetrahydrodipicolinate + L-glutamate + H2O + H(+). It participates in amino-acid biosynthesis; L-lysine biosynthesis via DAP pathway; LL-2,6-diaminopimelate from (S)-tetrahydrodipicolinate (aminotransferase route): step 1/1. In terms of biological role, involved in the synthesis of meso-diaminopimelate (m-DAP or DL-DAP), required for both lysine and peptidoglycan biosynthesis. Catalyzes the direct conversion of tetrahydrodipicolinate to LL-diaminopimelate. The chain is LL-diaminopimelate aminotransferase from Parasynechococcus marenigrum (strain WH8102).